The primary structure comprises 185 residues: Ribosome-recycling factor (185 aa).

The protein belongs to the RRF family.

It is found in the cytoplasm. Responsible for the release of ribosomes from messenger RNA at the termination of protein biosynthesis. May increase the efficiency of translation by recycling ribosomes from one round of translation to another. This chain is Ribosome-recycling factor, found in Mycobacteroides abscessus (strain ATCC 19977 / DSM 44196 / CCUG 20993 / CIP 104536 / JCM 13569 / NCTC 13031 / TMC 1543 / L948) (Mycobacterium abscessus).